Consider the following 193-residue polypeptide: Xanthine phosphoribosyltransferase (193 aa).

Xanthine contacts are provided by leucine 20 and asparagine 27. 5-phospho-alpha-D-ribose 1-diphosphate is bound at residue 129–133; it reads ANGKA. Lysine 157 is a xanthine binding site.

The protein belongs to the purine/pyrimidine phosphoribosyltransferase family. Xpt subfamily. Homodimer.

It localises to the cytoplasm. The enzyme catalyses XMP + diphosphate = xanthine + 5-phospho-alpha-D-ribose 1-diphosphate. It participates in purine metabolism; XMP biosynthesis via salvage pathway; XMP from xanthine: step 1/1. In terms of biological role, converts the preformed base xanthine, a product of nucleic acid breakdown, to xanthosine 5'-monophosphate (XMP), so it can be reused for RNA or DNA synthesis. The chain is Xanthine phosphoribosyltransferase from Bifidobacterium animalis subsp. lactis (strain AD011).